Reading from the N-terminus, the 141-residue chain is Nucleoside diphosphate kinase (141 aa).

Residues lysine 11, phenylalanine 59, arginine 87, threonine 93, arginine 104, and asparagine 114 each contribute to the ATP site. The active-site Pros-phosphohistidine intermediate is histidine 117.

This sequence belongs to the NDK family. As to quaternary structure, homotetramer. Requires Mg(2+) as cofactor.

It is found in the cytoplasm. It catalyses the reaction a 2'-deoxyribonucleoside 5'-diphosphate + ATP = a 2'-deoxyribonucleoside 5'-triphosphate + ADP. It carries out the reaction a ribonucleoside 5'-diphosphate + ATP = a ribonucleoside 5'-triphosphate + ADP. Its function is as follows. Major role in the synthesis of nucleoside triphosphates other than ATP. The ATP gamma phosphate is transferred to the NDP beta phosphate via a ping-pong mechanism, using a phosphorylated active-site intermediate. This chain is Nucleoside diphosphate kinase, found in Verminephrobacter eiseniae (strain EF01-2).